A 264-amino-acid polypeptide reads, in one-letter code: Apolipoprotein A-I (264 aa).

The signal sequence occupies residues 1–18 (MKAVVLTVAVLFLTGSQA). 2 tandem repeats follow at residues 67–88 (LKLL…EQLG) and 89–110 (PVTQ…QEMN). A 10 X approximate tandem repeats region spans residues 67–264 (LKLLDNWDTL…DDAAKKLSSQ (198 aa)). Methionine 109 carries the post-translational modification Methionine sulfoxide. The stretch at 111–121 (KDLEEVKQKVQ) is one 3; half-length repeat. 3 repeat units span residues 122 to 143 (PYLE…QKVE), 144 to 165 (PLST…EKLT), and 166 to 187 (PLGE…TQLA). A 7; truncated repeat occupies 188–207 (PYSDKMRERLAERLTALKDS). Methionine 193 carries the methionine sulfoxide modification. The stretch at 208–229 (ASFAEYHAKASEHLKTLREKAK) is repeat 8. The 9; half-length repeat unit spans residues 230–240 (PAIEDLGQGLL). Copy 10 of the repeat occupies 241–264 (PVLENLKASFLSAIDDAAKKLSSQ).

This sequence belongs to the apolipoprotein A1/A4/E family. As to quaternary structure, homodimer. Interacts with APOA1BP and CLU. Component of a sperm activating protein complex (SPAP), consisting of APOA1, an immunoglobulin heavy chain, an immunoglobulin light chain and albumin. Interacts with NDRG1. Interacts with SCGB3A2. Interacts with NAXE and YJEFN3. In terms of processing, glycosylated. Palmitoylated. Post-translationally, phosphorylation sites are present in the extracellular medium.

The protein resides in the secreted. Its function is as follows. Participates in the reverse transport of cholesterol from tissues to the liver for excretion by promoting cholesterol efflux from tissues and by acting as a cofactor for the lecithin cholesterol acyltransferase (LCAT). As part of the SPAP complex, activates spermatozoa motility. The chain is Apolipoprotein A-I (APOA1) from Castor canadensis (American beaver).